We begin with the raw amino-acid sequence, 183 residues long: ATP synthase subunit b, chloroplastic (183 aa).

A helical transmembrane segment spans residues 27–49 (LATNLINLTVVVGVLIFFGKGVL).

It belongs to the ATPase B chain family. In terms of assembly, F-type ATPases have 2 components, F(1) - the catalytic core - and F(0) - the membrane proton channel. F(1) has five subunits: alpha(3), beta(3), gamma(1), delta(1), epsilon(1). F(0) has four main subunits: a(1), b(1), b'(1) and c(10-14). The alpha and beta chains form an alternating ring which encloses part of the gamma chain. F(1) is attached to F(0) by a central stalk formed by the gamma and epsilon chains, while a peripheral stalk is formed by the delta, b and b' chains.

The protein resides in the plastid. The protein localises to the chloroplast thylakoid membrane. F(1)F(0) ATP synthase produces ATP from ADP in the presence of a proton or sodium gradient. F-type ATPases consist of two structural domains, F(1) containing the extramembraneous catalytic core and F(0) containing the membrane proton channel, linked together by a central stalk and a peripheral stalk. During catalysis, ATP synthesis in the catalytic domain of F(1) is coupled via a rotary mechanism of the central stalk subunits to proton translocation. Functionally, component of the F(0) channel, it forms part of the peripheral stalk, linking F(1) to F(0). The chain is ATP synthase subunit b, chloroplastic from Hordeum vulgare (Barley).